Reading from the N-terminus, the 537-residue chain is MPAPTQLFFPLIRNCELSRIYGTACYCHHKHLCCSSSYIPQSRLRYTPHPAYATFCRPKENWWQYTQGRRYASTPQKFYLTPPQVNSILKANEYSFKVPEFDGKNVSSILGFDSNQLPANAPIEDRRSAATCLQTRGMLLGVFDGHAGCACSQAVSERLFYYIAVSLLPHETLLEIENAVESGRALLPILQWHKHPNDYFSKEASKLYFNSLRTYWQELIDLNTGESTDIDVKEALINAFKRLDNDISLEAQVGDPNSFLNYLVLRVAFSGATACVAHVDGVDLHVANTGDSRAMLGVQEEDGSWSAVTLSNDHNAQNERELERLKLEHPKSEAKSVVKQDRLLGLLMPFRAFGDVKFKWSIDLQKRVIESGPDQLNDNEYTKFIPPNYHTPPYLTAEPEVTYHRLRPQDKFLVLATDGLWETMHRQDVVRIVGEYLTGMHHQQPIAVGGYKVTLGQMHGLLTERRTKMSSVFEDQNAATHLIRHAVGNNEFGTVDHERLSKMLSLPEELARMYRDDITIIVVQFNSHVVGAYQNQE.

A mitochondrion-targeting transit peptide spans 1 to 71 (MPAPTQLFFP…WWQYTQGRRY (71 aa)). One can recognise a PPM-type phosphatase domain in the interval 109-525 (ILGFDSNQLP…DDITIIVVQF (417 aa)). Mn(2+) contacts are provided by Asp144 and Gly145. At Lys202 the chain carries N6-acetyllysine. Residues Asp418 and Asp516 each contribute to the Mn(2+) site.

This sequence belongs to the PP2C family. Heterodimer of a catalytic (PDP1) and a regulatory (PDPR) subunit. Requires Mn(2+) as cofactor. Mg(2+) is required as a cofactor.

It localises to the mitochondrion. The catalysed reaction is O-phospho-L-seryl-[pyruvate dehydrogenase E1 alpha subunit] + H2O = L-seryl-[pyruvate dehydrogenase E1 alpha subunit] + phosphate. Magnesium-dependent and calcium-stimulated. PDP1 activity strongly depends on its Ca(2+)-dependent binding to the lipoyl domain of E2 subunit of component of the pyruvate dehydrogenase complex. Its function is as follows. Mitochondrial enzyme that catalyzes the dephosphorylation and concomitant reactivation of the alpha subunit of the E1 component of the pyruvate dehydrogenase complex (PDC), thereby stimulating the conversion of pyruvate into acetyl-CoA. This is [Pyruvate dehydrogenase [acetyl-transferring]]-phosphatase 1, mitochondrial from Homo sapiens (Human).